A 426-amino-acid polypeptide reads, in one-letter code: Tol-Pal system protein TolB (426 aa).

An N-terminal signal peptide occupies residues 1-24 (MKLKSRFTSIIGVITLFFSQTVTA).

Belongs to the TolB family. The Tol-Pal system is composed of five core proteins: the inner membrane proteins TolA, TolQ and TolR, the periplasmic protein TolB and the outer membrane protein Pal. They form a network linking the inner and outer membranes and the peptidoglycan layer.

The protein localises to the periplasm. Its function is as follows. Part of the Tol-Pal system, which plays a role in outer membrane invagination during cell division and is important for maintaining outer membrane integrity. The chain is Tol-Pal system protein TolB from Actinobacillus pleuropneumoniae serotype 3 (strain JL03).